Reading from the N-terminus, the 400-residue chain is Aspartate aminotransferase (400 aa).

L-aspartate is bound by residues Gly37, Trp126, and Asn176. At Lys238 the chain carries N6-(pyridoxal phosphate)lysine. An L-aspartate-binding site is contributed by Arg367.

The protein belongs to the class-I pyridoxal-phosphate-dependent aminotransferase family. In terms of assembly, homodimer. The cofactor is pyridoxal 5'-phosphate.

It localises to the cytoplasm. It carries out the reaction L-aspartate + 2-oxoglutarate = oxaloacetate + L-glutamate. Its function is as follows. Catalyzes the reversible conversion of aspartate and 2-oxoglutarate to glutamate and oxaloacetate. Has very weak prephenate aminotransferase activity. The polypeptide is Aspartate aminotransferase (Musicola paradisiaca (strain Ech703) (Dickeya paradisiaca)).